Here is a 1075-residue protein sequence, read N- to C-terminus: MKPDRDALDEYFEYDAEEFLVSLALLITEGRTPECSVKGRAESFHCPPAQSRFPGTARHECSDKLAQCRQARRTRSEVTLLWKNNLPIMVEVMLLPDCCYSDEGPSTEGADLNDPAIKQDALLLERWILEPVPRQNGDRFIEEKALLLAVRSFVFFSQLSAWLSVSHGAIPRNILYRISAADVDLQWSFSQTPTEHVFPVPNVSHNVALKVSVQSLPRQAHYPVLTCSIHTNIGLYEKRIQEQELRACQHHGPGEVEYRCPSSSQSLCSKHTWTMAPVSALHVRSGMPPEYTAAIRNVRLCPGTGSKSDQGAPQASVLGFSGTGGEVRSQEASVRTFKSLPVVDSSVSSCQSSRQPVGEPNPLMDSLIQDRQEVIARIAQHLIHCDPSSSRMSELPFNTQESTSLSPKLHPVSQESGCVRRYKEAFSVSFGSPEFGSPGDSREGKVREKSETRPGETCTSHSLYPRQPAGEANPLIGSLLQERQDVIARIAQHLEHIDPAAHIPRPAFSKHDSNSIPSKVFRSSFDDKTLLKKGRENVSVSVSHTEVSLLGDRGDGESLKPSKCLRSFKYSPQEKPLKPEVRTQHQNHPDSITPTARQELLNKAAGLLTSSNTALCKESSLGLVSRLESTSCKLQLKEQEMSHETEKQCLHCNSIDKQICTNTCTEKINDEHSPGSLRHLQCDDSKGIDSKLKVTLLEMPDSLNKNKTNCSSKDSKRSKTCEQSIRVGTENDLSEENEGPGSTVSDRLKTEQEAKRDSGAGKPHSVKHCLSAGERLHSADMLRTTLKHSSVWRKHNFHSLDGTSTRAFHPQTGLPLLSSPVPQRKTQSGCFDLDASLLHLRSLSSKSSRPCLNIDEDPDVHEKPFLSSSAPPITSLSLLGNFEESVLNYRLDPLGIVDGFTAEVGASGTFCPTHLTLPVEVSFYSVSDDNAPSPYMGVITLESLGKRGYRVPPSGTIQVTLFNPNKTVVKMFVVVYDLRGMPANHQTFLRQRTFSVPVKQEMKRSINKENVQHTAQLLRYLIHLRFQSSKSGKIYLHRDVRLLFSRKSMEVDSGAAYELKSYTESPTNPQFSPRC.

The transactivation domain 1 (TAD1) stretch occupies residues 24 to 32; the sequence is ALLITEGRT. 3 disordered regions span residues 430-469, 570-592, and 703-766; these read FGSPEFGSPGDSREGKVREKSETRPGETCTSHSLYPRQPA, YSPQEKPLKPEVRTQHQNHPDSI, and LNKN…PHSV. Positions 440–454 are enriched in basic and acidic residues; the sequence is DSREGKVREKSETRP. The segment covering 703 to 712 has biased composition (polar residues); that stretch reads LNKNKTNCSS. Positions 746 to 759 are enriched in basic and acidic residues; that stretch reads DRLKTEQEAKRDSG. Positions 878–935 are required for macropage invasion; that stretch reads LLGNFEESVLNYRLDPLGIVDGFTAEVGASGTFCPTHLTLPVEVSFYSVSDDNAPSPY. Residues 962 to 970 form a transactivation domain 2 (TAD2) region; sequence FNPNKTVVK.

The protein belongs to the ATOS family.

The protein resides in the nucleus. In terms of biological role, transcription regulator that syncronizes transcriptional and translational programs to promote macrophage invasion of tissues. This Mus musculus (Mouse) protein is Atos homolog protein A (Atosa).